Here is a 403-residue protein sequence, read N- to C-terminus: Sorting nexin-32 (403 aa).

In terms of domain architecture, PX spans 20 to 168 (LQGDSSLQVE…VFLEYGQDLS (149 aa)). Residues 258–335 (NQLRTSFLKL…KARTRNREVR (78 aa)) are a coiled coil.

Belongs to the sorting nexin family.

Functionally, may be involved in several stages of intracellular trafficking. The sequence is that of Sorting nexin-32 (SNX32) from Homo sapiens (Human).